A 93-amino-acid chain; its full sequence is Large ribosomal subunit protein uL23 (93 aa).

The protein belongs to the universal ribosomal protein uL23 family. In terms of assembly, part of the 50S ribosomal subunit. Contacts protein L29, and trigger factor when it is bound to the ribosome.

In terms of biological role, one of the early assembly proteins it binds 23S rRNA. One of the proteins that surrounds the polypeptide exit tunnel on the outside of the ribosome. Forms the main docking site for trigger factor binding to the ribosome. The sequence is that of Large ribosomal subunit protein uL23 from Campylobacter hominis (strain ATCC BAA-381 / DSM 21671 / CCUG 45161 / LMG 19568 / NCTC 13146 / CH001A).